Here is a 112-residue protein sequence, read N- to C-terminus: SPbeta prophage-derived uncharacterized protein YoqB (112 aa).

The chain is SPbeta prophage-derived uncharacterized protein YoqB (yoqB) from Bacillus subtilis (strain 168).